A 255-amino-acid polypeptide reads, in one-letter code: 7alpha-hydroxysteroid dehydrogenase (255 aa).

NAD(+) contacts are provided by residues I23, 42-43 (DI), 68-69 (DI), and N95. G99, S146, N151, and Y159 together coordinate glycochenodeoxycholate. NAD(+) is bound by residues Y159, K163, and 192 to 194 (ILT). The Proton acceptor role is filled by Y159.

It belongs to the short-chain dehydrogenases/reductases (SDR) family. In terms of assembly, homotetramer.

It catalyses the reaction cholate + NAD(+) = 3alpha,12alpha-dihydroxy-7-oxo-5beta-cholanate + NADH + H(+). The catalysed reaction is chenodeoxycholate + NAD(+) = 7-oxolithocholate + NADH + H(+). The enzyme catalyses taurochenodeoxycholate + NAD(+) = 7-oxotaurolithocholate + NADH + H(+). It carries out the reaction taurocholate + NAD(+) = 7-oxo-taurodeoxycholate + NADH + H(+). It catalyses the reaction glycocholate + NAD(+) = 7-oxo-glycodeoxycholate + NADH + H(+). The catalysed reaction is glycochenodeoxycholate + NAD(+) = 7-oxoglycolithocholate + NADH + H(+). Its function is as follows. 7alpha-hydroxysteroid dehydrogenase involved in the metabolism of bile acids. Catalyzes the NAD(+)-dependent oxidation of the 7alpha-hydroxy group of 7alpha-hydroxysteroids, such as the major human bile acids cholate and chenodeoxycholate, to the corresponding 7-oxosteroids. To a lesser extent, can also act on taurochenodeoxycholate, taurocholate and glycocholate. Can also use glycochenodeoxycholate as substrate. Is not able to use NADP(+) instead of NAD(+) as the electron acceptor. The sequence is that of 7alpha-hydroxysteroid dehydrogenase (hdhA) from Escherichia coli O157:H7.